A 330-amino-acid polypeptide reads, in one-letter code: Biotin synthase (330 aa).

The Radical SAM core domain occupies 43–272; the sequence is FMGDKFDTCS…RAFLRFSGGR (230 aa). The [4Fe-4S] cluster site is built by Cys-61, Cys-65, and Cys-68. Residues Ser-105, Cys-137, Cys-197, and Arg-267 each coordinate [2Fe-2S] cluster.

It belongs to the radical SAM superfamily. Biotin synthase family. In terms of assembly, homodimer. It depends on [4Fe-4S] cluster as a cofactor. [2Fe-2S] cluster is required as a cofactor.

The enzyme catalyses (4R,5S)-dethiobiotin + (sulfur carrier)-SH + 2 reduced [2Fe-2S]-[ferredoxin] + 2 S-adenosyl-L-methionine = (sulfur carrier)-H + biotin + 2 5'-deoxyadenosine + 2 L-methionine + 2 oxidized [2Fe-2S]-[ferredoxin]. The protein operates within cofactor biosynthesis; biotin biosynthesis; biotin from 7,8-diaminononanoate: step 2/2. Catalyzes the conversion of dethiobiotin (DTB) to biotin by the insertion of a sulfur atom into dethiobiotin via a radical-based mechanism. The polypeptide is Biotin synthase (Porphyromonas gingivalis (strain ATCC 33277 / DSM 20709 / CIP 103683 / JCM 12257 / NCTC 11834 / 2561)).